The following is a 174-amino-acid chain: Magnetosome protein MamT (174 aa).

Topologically, residues 1–9 (MGTPGGGRR) are cytoplasmic. Residues 10–28 (WMTLISITLLMVVGLGLYW) form a helical membrane-spanning segment. Topologically, residues 29 to 174 (DELSLSAGIS…EKKSGIKWLL (146 aa)) are lumenal. An MCR (magnetochrome) 1 motif is present at residues 87–107 (VMPGTGMPHPYVGDCIQCHLM). Heme-binding residues include Cys-101, Cys-104, His-105, Cys-152, Cys-155, and His-156. Residues 138-158 (ILPTTRQPHPPAGRCIKCHDI) carry the MCR 2 motif.

Belongs to the magnetosome MamT family. Heme is required as a cofactor.

It localises to the magnetosome membrane. May play a role in magnetite crystal maturation. May transfer electrons to balance the Fe(2+)-Fe(3+) ratio during magnetite formation. This chain is Magnetosome protein MamT, found in Magnetospirillum gryphiswaldense (strain DSM 6361 / JCM 21280 / NBRC 15271 / MSR-1).